A 227-amino-acid chain; its full sequence is Ribosomal RNA large subunit methyltransferase E (227 aa).

The S-adenosyl-L-methionine site is built by Gly-78, Trp-80, Asp-103, Asp-119, and Asp-143. The active-site Proton acceptor is Lys-183.

This sequence belongs to the class I-like SAM-binding methyltransferase superfamily. RNA methyltransferase RlmE family.

It is found in the cytoplasm. It catalyses the reaction uridine(2552) in 23S rRNA + S-adenosyl-L-methionine = 2'-O-methyluridine(2552) in 23S rRNA + S-adenosyl-L-homocysteine + H(+). Functionally, specifically methylates the uridine in position 2552 of 23S rRNA at the 2'-O position of the ribose in the fully assembled 50S ribosomal subunit. The chain is Ribosomal RNA large subunit methyltransferase E from Rickettsia typhi (strain ATCC VR-144 / Wilmington).